The chain runs to 156 residues: Phosphopantetheine adenylyltransferase (156 aa).

T9 contributes to the substrate binding site. Residues 9–10 and H17 contribute to the ATP site; that span reads TF. Substrate-binding residues include K41, L73, and R87. ATP contacts are provided by residues 88–90, E98, and 123–129; these read GVR and WVFVSST.

It belongs to the bacterial CoaD family. In terms of assembly, homohexamer. Mg(2+) is required as a cofactor.

The protein resides in the cytoplasm. The catalysed reaction is (R)-4'-phosphopantetheine + ATP + H(+) = 3'-dephospho-CoA + diphosphate. Its pathway is cofactor biosynthesis; coenzyme A biosynthesis; CoA from (R)-pantothenate: step 4/5. Functionally, reversibly transfers an adenylyl group from ATP to 4'-phosphopantetheine, yielding dephospho-CoA (dPCoA) and pyrophosphate. This is Phosphopantetheine adenylyltransferase from Haemophilus influenzae (strain PittEE).